The primary structure comprises 757 residues: MWAPSGQGPAGWDRRRVGARLRAALAGLQELQGLRATQQARVRGALGLHPAPGPRGQELRLEAALTALREQLSRLRRQDAGLKTHLDQLDQQISELQLDVSRSSCEALDSDSRPSSGFYELSDAGSCSLSTSCASVCSDRLSPSLGSWLPVFQPSKSRSGIGDWRPRSADETTVPAWSPQLTEDSRLLHGAEGTGRLTGMFRPRPVSTGDLERVLPADVGLQRAGTDAAHLLGQGIEIPAHALDPTYQRDLVARGGQEVYPYPSPLHAVALQSPLFALPKEAPCFDICSPPQEPPLVPVDENRTQPEPIRELGSAEAYIHRLLHLRGQELPLRDVGQEQGGDTAAFPPKPCGQRSESTCQLEKQACGADRGGLKLGRGAAKDSLKQHGPVSLVGAEPLSSPLKEETIPWNPCVHGDNTVGSSPCSQAQQPLNDCGQGPVLSPSRVLGTESPPLAPEPFAYTSCTTGETSPVKLRMGFSQNKAVKVRRRVSEKVPRLGKQLPPQPERQRVTERDPSRPHQGGLSRRPTLAREPPGRSCSESTLYPVPFLVPVVVAQRESYPTSPQAFFPMEAALLSSAARRKQRRWQSTMEISAKAGSVSQPGPSMGLPRSPAKRGSGPRAQSRPTLARQDACARCESDPSEHSADCTSLYHSTIAETSEDEEASDHTANRFGDESSSNDSEGCFRGSRRRLAIGSAEAGQGGWAWPRVPPQQPSRAPGNTRPPLPPVPKLCRIKASKALKKKIRRFQPAALKVMTMV.

Residues 1–281 (MWAPSGQGPA…QSPLFALPKE (281 aa)) are inhibition of Nodal signaling. A coiled-coil region spans residues 55-107 (RGQELRLEAALTALREQLSRLRRQDAGLKTHLDQLDQQISELQLDVSRSSCEA). 3 disordered regions span residues 486–540 (RRRV…CSES), 584–684 (RWQS…EGCF), and 696–728 (AEAGQGGWAWPRVPPQQPSRAPGNTRPPLPPVP). Basic and acidic residues-rich tracts occupy residues 505 to 516 (ERQRVTERDPSR) and 631 to 644 (ACARCESDPSEHSA). Residues 645–656 (DCTSLYHSTIAE) are compositionally biased toward polar residues. The segment covering 664 to 673 (SDHTANRFGD) has biased composition (basic and acidic residues). The PDZ-binding motif lies at 754–757 (MTMV).

It belongs to the dapper family. In terms of assembly, can form homodimers and heterodimers with DACT1 or DACT3. Interacts with CSNK1D, PKA catalytic subunit, PKC-type kinase, CSNK2B, DVL1, DVL2, DVL3, VANGL1, VANGL2, TGFBR1, CTNNB1, CTNND2, CTNND1, LEF1, TCF7, TCF7L1 and HDAC1. In terms of tissue distribution, expressed in kidney (inner medullary collecting duct). Expressed in epidermal keratinocytes and hair follicles.

Involved in regulation of intracellular signaling pathways during development. Negatively regulates the Nodal signaling pathway, possibly by promoting the lysosomal degradation of Nodal receptors, such as TGFBR1. May be involved in control of the morphogenetic behavior of kidney ureteric bud cells by keeping cells epithelial and restraining their mesenchymal character. May play an inhibitory role in the re-epithelialization of skin wounds by attenuating TGF-beta signaling. This is Dapper homolog 2 (Dact2) from Mus musculus (Mouse).